Reading from the N-terminus, the 304-residue chain is Protease HtpX homolog (304 aa).

The next 2 membrane-spanning stretches (helical) occupy residues 14–34 (VFII…IGII) and 39–59 (YLNG…IMVM). Residue His-144 coordinates Zn(2+). Glu-145 is an active-site residue. His-148 contributes to the Zn(2+) binding site. 2 consecutive transmembrane segments (helical) span residues 159–179 (IAIA…RLIF) and 202–222 (IIIY…ATAI). Glu-231 is a Zn(2+) binding site. A disordered region spans residues 275–304 (SSPLKSKKDKPGLFDSHPPISSRIERLENM).

The protein belongs to the peptidase M48B family. The cofactor is Zn(2+).

The protein localises to the cell membrane. This is Protease HtpX homolog from Listeria innocua serovar 6a (strain ATCC BAA-680 / CLIP 11262).